We begin with the raw amino-acid sequence, 106 residues long: Urease subunit beta (106 aa).

The protein belongs to the urease beta subunit family. As to quaternary structure, heterotrimer of UreA (gamma), UreB (beta) and UreC (alpha) subunits. Three heterotrimers associate to form the active enzyme.

Its subcellular location is the cytoplasm. The enzyme catalyses urea + 2 H2O + H(+) = hydrogencarbonate + 2 NH4(+). The protein operates within nitrogen metabolism; urea degradation; CO(2) and NH(3) from urea (urease route): step 1/1. The protein is Urease subunit beta of Acinetobacter baumannii (strain SDF).